Here is a 70-residue protein sequence, read N- to C-terminus: Peptide BmKn2 (70 aa).

An N-terminal signal peptide occupies residues 1-23 (MKSQTFFLLFLVVLLLAISQSEA). At F36 the chain carries Phenylalanine amide. A propeptide spanning residues 40-70 (SMRDMDTMKYLYDPSLSAADLKTLQKLMENY) is cleaved from the precursor.

It belongs to the non-disulfide-bridged peptide (NDBP) superfamily. Short antimicrobial peptide (group 4) family. In terms of tissue distribution, expressed by the venom gland.

It localises to the secreted. Its subcellular location is the target cell membrane. Functionally, antimicrobial peptide with potent activity against bacteria. Has strong antibacterial activity against Gram-positive bacteria S.aureus, M.luteus, B.subtilis, and Gram-negative bacteria E.coli, P.aeruginosa and N.gonorrhoeae. Also shows low activity against HIV-1 PV. The chain is Peptide BmKn2 from Olivierus martensii (Manchurian scorpion).